A 646-amino-acid chain; its full sequence is Anoctamin-10 (646 aa).

A run of 8 helical transmembrane segments spans residues 210–230, 241–261, 314–334, 357–377, 404–424, 502–522, 557–577, and 592–612; these read LYFGFLEYFTFALIPMALIGI, DKYVLFAVFNLVWSTVFLEVW, IYLVSVPFVLLCLYLSFYVMM, VLLFVPSIIYAVVIEIMNLLY, VLVFNFVNCFASLFYIAFVMQ, FLLFGYVSLFSCVHPLAAVLV, LAFETMSIIAVVTNCALIALS, and ILTVVAIEHVLLAFKFILAFV.

This sequence belongs to the anoctamin family.

It is found in the membrane. Does not exhibit calcium-activated chloride channel (CaCC) activity. Can inhibit the activity of ANO1. The chain is Anoctamin-10 (ano10) from Danio rerio (Zebrafish).